Consider the following 902-residue polypeptide: HTH-type transcriptional regulator MalT (902 aa).

Serine 39–threonine 46 is an ATP binding site. Positions glutamate 830–leucine 895 constitute an HTH luxR-type domain. The segment at residues asparagine 854–arginine 873 is a DNA-binding region (H-T-H motif).

This sequence belongs to the MalT family. In terms of assembly, monomer in solution. Oligomerizes to an active state in the presence of the positive effectors ATP and maltotriose.

Its activity is regulated as follows. Activated by ATP and maltotriose, which are both required for DNA binding. Its function is as follows. Positively regulates the transcription of the maltose regulon whose gene products are responsible for uptake and catabolism of malto-oligosaccharides. Specifically binds to the promoter region of its target genes, recognizing a short DNA motif called the MalT box. The sequence is that of HTH-type transcriptional regulator MalT from Salmonella dublin (strain CT_02021853).